We begin with the raw amino-acid sequence, 178 residues long: Large ribosomal subunit protein bL25 (178 aa).

Belongs to the bacterial ribosomal protein bL25 family. CTC subfamily. In terms of assembly, part of the 50S ribosomal subunit; part of the 5S rRNA/L5/L18/L25 subcomplex. Contacts the 5S rRNA. Binds to the 5S rRNA independently of L5 and L18.

Functionally, this is one of the proteins that binds to the 5S RNA in the ribosome where it forms part of the central protuberance. The chain is Large ribosomal subunit protein bL25 from Helicobacter pylori (strain G27).